Consider the following 231-residue polypeptide: Membrane protein YknW (231 aa).

The next 5 helical transmembrane spans lie at 38–58 (VWGP…LQSL), 93–113 (GAII…WLCV), 128–148 (LSLF…IVAF), 171–191 (LASV…LLAI), and 205–225 (WISA…SGLI).

As to quaternary structure, interacts with a complex composed of YknX, YknY and YknZ.

Its subcellular location is the cell membrane. In terms of biological role, part of an unusual four-component transporter, which is required for protection against the killing factor SdpC (sporulation-delaying protein). Has a role in the assembly of the YknXYZ complex. This is Membrane protein YknW (yknW) from Bacillus subtilis (strain 168).